The sequence spans 84 residues: Toxin Aah4 (84 aa).

The signal sequence occupies residues 1–19; that stretch reads MNYLIMFSLALLLVIGVES. The region spanning 21 to 82 is the LCN-type CS-alpha/beta domain; sequence RDGYIVDSKN…PIKDPSDDCH (62 aa). Intrachain disulfides connect cysteine 31-cysteine 81, cysteine 35-cysteine 53, cysteine 39-cysteine 63, and cysteine 43-cysteine 65. Position 84 (arginine 84) is a propeptide, removed by a carboxypeptidase.

The protein belongs to the long (4 C-C) scorpion toxin superfamily. Sodium channel inhibitor family. Alpha subfamily. In terms of tissue distribution, expressed by the venom gland.

The protein localises to the secreted. Alpha toxins bind voltage-independently at site-3 of sodium channels (Nav) and inhibit the inactivation of the activated channels, thereby blocking neuronal transmission. This toxin seems to specifically act on Nav1.6/SCN8A sodium channel. In vitro, it inhibits the proliferation of the prostate cancer cell line DU145 (IC(50)=15 uM). It shows low effect on the adhesion of DU145 cells to fibronectin (at 15 uM) and is inactive on DU145 cells migration. This Androctonus australis (Sahara scorpion) protein is Toxin Aah4.